A 130-amino-acid chain; its full sequence is uncharacterized protein (130 aa).

This is an uncharacterized protein from Orgyia pseudotsugata multicapsid polyhedrosis virus (OpMNPV).